We begin with the raw amino-acid sequence, 179 residues long: Inner membrane-spanning protein YciB (179 aa).

The next 5 helical transmembrane spans lie at 22–42 (IYAATAALIVATAIVLIYSWV), 50–70 (MALITFVLVVVFGGLTLFFHN), 76–96 (WKVTVIYALFAGALLVSQWVM), 121–141 (LAWAVFFILCGLANIYIAFWL), and 149–169 (FKVFGLTALTLIFTLLSGIYI).

It belongs to the YciB family.

The protein resides in the cell inner membrane. Plays a role in cell envelope biogenesis, maintenance of cell envelope integrity and membrane homeostasis. The polypeptide is Inner membrane-spanning protein YciB (Escherichia coli O127:H6 (strain E2348/69 / EPEC)).